Consider the following 156-residue polypeptide: uncharacterized protein (156 aa).

Residues 10–156 enclose the N-acetyltransferase domain; that stretch reads VAARTFPLAC…NDYVMVRELV (147 aa).

This sequence belongs to the acetyltransferase family.

This is an uncharacterized protein from Mycobacterium bovis (strain ATCC BAA-935 / AF2122/97).